The sequence spans 199 residues: Tumor necrosis factor ligand superfamily member 4 (199 aa).

Topologically, residues 1-25 are cytoplasmic; the sequence is MEGEGVQPPDENLENGSRPRFKWKK. A helical; Signal-anchor for type II membrane protein membrane pass occupies residues 26-48; it reads VLRLVVSGIKAAGLLLCVVYVCL. The Extracellular segment spans residues 49–199; it reads QFSSSPAKDS…YSSTVNQVPL (151 aa). The THD domain maps to 59-176; the sequence is PIQRLRAPVT…QINDGELIIV (118 aa). 2 cysteine pairs are disulfide-bonded: cysteine 70–cysteine 163 and cysteine 98–cysteine 184. Asparagine 91 and asparagine 157 each carry an N-linked (GlcNAc...) asparagine glycan.

The protein belongs to the tumor necrosis factor family. In terms of assembly, homotrimer. In terms of tissue distribution, detected in T-cell lines, but not in a macrophage cell line.

It is found in the membrane. Cytokine that binds to TNFRSF4. Co-stimulates T-cell proliferation and cytokine production. This Rattus norvegicus (Rat) protein is Tumor necrosis factor ligand superfamily member 4 (Tnfsf4).